Here is a 177-residue protein sequence, read N- to C-terminus: NAD(P)H-quinone oxidoreductase subunit 6, chloroplastic (177 aa).

The next 5 helical transmembrane spans lie at 10–30 (ILLV…VLLT), 32–52 (PIYS…FYIP), 61–81 (AQLL…VMFM), 92–112 (FWTV…FSLI), and 152–172 (FYLP…GAIA).

The protein belongs to the complex I subunit 6 family. NDH is composed of at least 16 different subunits, 5 of which are encoded in the nucleus.

The protein localises to the plastid. The protein resides in the chloroplast thylakoid membrane. It carries out the reaction a plastoquinone + NADH + (n+1) H(+)(in) = a plastoquinol + NAD(+) + n H(+)(out). The catalysed reaction is a plastoquinone + NADPH + (n+1) H(+)(in) = a plastoquinol + NADP(+) + n H(+)(out). Its function is as follows. NDH shuttles electrons from NAD(P)H:plastoquinone, via FMN and iron-sulfur (Fe-S) centers, to quinones in the photosynthetic chain and possibly in a chloroplast respiratory chain. The immediate electron acceptor for the enzyme in this species is believed to be plastoquinone. Couples the redox reaction to proton translocation, and thus conserves the redox energy in a proton gradient. The protein is NAD(P)H-quinone oxidoreductase subunit 6, chloroplastic (ndhG) of Nymphaea alba (White water-lily).